We begin with the raw amino-acid sequence, 264 residues long: Sec-independent protein translocase protein TatC (264 aa).

6 consecutive transmembrane segments (helical) span residues 20–40 (VVVI…EPAE), 85–105 (FFAQ…PVAV), 131–151 (AVGL…PYIL), 175–195 (FVLQ…VMFA), 211–231 (IRYA…DGSG), and 232–252 (VTMW…MFFA).

The protein belongs to the TatC family. Forms a complex with TatA.

It localises to the cell membrane. Its function is as follows. Part of the twin-arginine translocation (Tat) system that transports large folded proteins containing a characteristic twin-arginine motif in their signal peptide across membranes. The polypeptide is Sec-independent protein translocase protein TatC (Cenarchaeum symbiosum (strain A)).